The following is a 281-amino-acid chain: 2,3,4,5-tetrahydropyridine-2,6-dicarboxylate N-succinyltransferase (281 aa).

Arg-108 and Asp-145 together coordinate substrate.

This sequence belongs to the transferase hexapeptide repeat family. In terms of assembly, homotrimer.

The protein resides in the cytoplasm. The enzyme catalyses (S)-2,3,4,5-tetrahydrodipicolinate + succinyl-CoA + H2O = (S)-2-succinylamino-6-oxoheptanedioate + CoA. The protein operates within amino-acid biosynthesis; L-lysine biosynthesis via DAP pathway; LL-2,6-diaminopimelate from (S)-tetrahydrodipicolinate (succinylase route): step 1/3. This chain is 2,3,4,5-tetrahydropyridine-2,6-dicarboxylate N-succinyltransferase, found in Rhodopseudomonas palustris (strain ATCC BAA-98 / CGA009).